The following is a 273-amino-acid chain: MSTIRPVFYVSDGTGITAETIGHSLLTQFSGFTFVTERMVFIDDAEKARDASQRILAASQRYRVRPIVVNSCVNPYLSVILAESGALMLDVFAPFIGLLEHELNTSRHSRIGRAHGMVDFETYHRRINAMNFALAHDDGVAASYDEAEVILVAVSRAGKTPTCIYLALHYGIRAANYPLIDEDLNSDQLPLRLRPYRKKLFGLTINPERLQQIRQERRPNSRYAALDTCKREVAAAERMFSAERITTLSTTHTSIEEISSKVLVTLGLQREMF.

153–160 (AVSRAGKT) is an ADP binding site.

The protein belongs to the pyruvate, phosphate/water dikinase regulatory protein family. PSRP subfamily.

The enzyme catalyses [pyruvate, water dikinase] + ADP = [pyruvate, water dikinase]-phosphate + AMP + H(+). It catalyses the reaction [pyruvate, water dikinase]-phosphate + phosphate + H(+) = [pyruvate, water dikinase] + diphosphate. Its function is as follows. Bifunctional serine/threonine kinase and phosphorylase involved in the regulation of the phosphoenolpyruvate synthase (PEPS) by catalyzing its phosphorylation/dephosphorylation. The polypeptide is Putative phosphoenolpyruvate synthase regulatory protein (Xylella fastidiosa (strain 9a5c)).